A 428-amino-acid polypeptide reads, in one-letter code: Protein clpf-1 (428 aa).

ATP-binding positions include E16, R56, and 124–129 (DVGKTT).

Belongs to the Clp1 family. Clp1 subfamily.

Its subcellular location is the nucleus. Required for endonucleolytic cleavage during polyadenylation-dependent pre-mRNA 3'-end formation. The polypeptide is Protein clpf-1 (Caenorhabditis elegans).